The primary structure comprises 183 residues: Peptidyl-tRNA hydrolase (183 aa).

Tyrosine 14 lines the tRNA pocket. The Proton acceptor role is filled by histidine 19. Tyrosine 55 and asparagine 57 together coordinate tRNA.

Belongs to the PTH family. In terms of assembly, monomer.

It is found in the cytoplasm. The enzyme catalyses an N-acyl-L-alpha-aminoacyl-tRNA + H2O = an N-acyl-L-amino acid + a tRNA + H(+). Functionally, hydrolyzes ribosome-free peptidyl-tRNAs (with 1 or more amino acids incorporated), which drop off the ribosome during protein synthesis, or as a result of ribosome stalling. In terms of biological role, catalyzes the release of premature peptidyl moieties from peptidyl-tRNA molecules trapped in stalled 50S ribosomal subunits, and thus maintains levels of free tRNAs and 50S ribosomes. This chain is Peptidyl-tRNA hydrolase, found in Thermus thermophilus (strain ATCC BAA-163 / DSM 7039 / HB27).